Reading from the N-terminus, the 236-residue chain is 2,3,4,5-tetrahydropyridine-2,6-dicarboxylate N-acetyltransferase (236 aa).

Belongs to the transferase hexapeptide repeat family. DapH subfamily.

It catalyses the reaction (S)-2,3,4,5-tetrahydrodipicolinate + acetyl-CoA + H2O = L-2-acetamido-6-oxoheptanedioate + CoA. It functions in the pathway amino-acid biosynthesis; L-lysine biosynthesis via DAP pathway; LL-2,6-diaminopimelate from (S)-tetrahydrodipicolinate (acetylase route): step 1/3. Its function is as follows. Catalyzes the transfer of an acetyl group from acetyl-CoA to tetrahydrodipicolinate. This is 2,3,4,5-tetrahydropyridine-2,6-dicarboxylate N-acetyltransferase from Clostridium perfringens (strain SM101 / Type A).